We begin with the raw amino-acid sequence, 339 residues long: AT-hook motif nuclear-localized protein 26 (339 aa).

The segment covering 1 to 12 has biased composition (polar residues); the sequence is MDPVQSHGSQSS. Disordered stretches follow at residues 1–132 and 273–339; these read MDPV…NKPK and MQTP…RPPY. Residues 24–45 are compositionally biased toward low complexity; sequence LHLQQQQQHQQQHQQQQQQQFF. Polar residues predominate over residues 82–93; the sequence is NMDNIANTNSGS. Residues 102–113 show a composition bias toward gly residues; the sequence is GGEGGSGGGGSG. Positions 118-130 form a DNA-binding region, a.T hook; the sequence is RRPRGRPAGSKNK. A PPC domain is found at 142–279; sequence ANALRTHVME…EDEMQTPVQG (138 aa). Gly residues predominate over residues 278–291; the sequence is QGGGGGGGGGGGMG. Positions 292 to 310 are enriched in low complexity; the sequence is SPPMMGQQQAMAAMAAAQG.

It is found in the nucleus. In terms of biological role, transcription factor that specifically binds AT-rich DNA sequences related to the nuclear matrix attachment regions (MARs). The sequence is that of AT-hook motif nuclear-localized protein 26 from Arabidopsis thaliana (Mouse-ear cress).